We begin with the raw amino-acid sequence, 438 residues long: Thymidine phosphorylase (438 aa).

The protein belongs to the thymidine/pyrimidine-nucleoside phosphorylase family. Homodimer.

The catalysed reaction is thymidine + phosphate = 2-deoxy-alpha-D-ribose 1-phosphate + thymine. It participates in pyrimidine metabolism; dTMP biosynthesis via salvage pathway; dTMP from thymine: step 1/2. Its function is as follows. The enzymes which catalyze the reversible phosphorolysis of pyrimidine nucleosides are involved in the degradation of these compounds and in their utilization as carbon and energy sources, or in the rescue of pyrimidine bases for nucleotide synthesis. The protein is Thymidine phosphorylase of Sinorhizobium medicae (strain WSM419) (Ensifer medicae).